A 142-amino-acid chain; its full sequence is Hemoglobin subunit zeta (142 aa).

Serine 2 carries the N-acetylserine modification. The 141-residue stretch at serine 2–arginine 142 folds into the Globin domain. The residue at position 29 (threonine 29) is a Phosphothreonine. Serine 53 carries the phosphoserine modification. Histidine 59 serves as a coordination point for heme b. Phosphoserine occurs at positions 73 and 82. Histidine 88 serves as a coordination point for heme b.

Belongs to the globin family. As to quaternary structure, heterotetramer of two zeta chains and beta-type chains.

The zeta chain is an alpha-type chain of mammalian embryonic hemoglobin. The polypeptide is Hemoglobin subunit zeta (HBZ1) (Pan troglodytes (Chimpanzee)).